A 652-amino-acid chain; its full sequence is Acetyl-coenzyme A synthetase (652 aa).

Residues 190–193 (RGGR) and Thr-310 contribute to the CoA site. Residues 386–388 (GEP), 410–415 (DTWWQT), Asp-499, and Arg-514 each bind ATP. Ser-522 is a CoA binding site. ATP is bound at residue Arg-525. Mg(2+) contacts are provided by Val-536, His-538, and Val-541. Arg-583 serves as a coordination point for CoA. An N6-acetyllysine modification is found at Lys-608.

This sequence belongs to the ATP-dependent AMP-binding enzyme family. Requires Mg(2+) as cofactor. Acetylated. Deacetylation by the SIR2-homolog deacetylase activates the enzyme.

It carries out the reaction acetate + ATP + CoA = acetyl-CoA + AMP + diphosphate. Its function is as follows. Catalyzes the conversion of acetate into acetyl-CoA (AcCoA), an essential intermediate at the junction of anabolic and catabolic pathways. AcsA undergoes a two-step reaction. In the first half reaction, AcsA combines acetate with ATP to form acetyl-adenylate (AcAMP) intermediate. In the second half reaction, it can then transfer the acetyl group from AcAMP to the sulfhydryl group of CoA, forming the product AcCoA. The sequence is that of Acetyl-coenzyme A synthetase from Methylorubrum extorquens (strain CM4 / NCIMB 13688) (Methylobacterium extorquens).